We begin with the raw amino-acid sequence, 270 residues long: UPF0246 protein Psyc_0554 (270 aa).

It belongs to the UPF0246 family.

The polypeptide is UPF0246 protein Psyc_0554 (Psychrobacter arcticus (strain DSM 17307 / VKM B-2377 / 273-4)).